Here is a 581-residue protein sequence, read N- to C-terminus: MAMSQESLTFKDVFVDFTLEEWQQLDSAQKNLYRDVMLENYSHLVSVGHLVGKPDVIFRLGPGDESWMADGGTPVRTCAGEDRPEVWEVDEQIDHYKESQDKFLWQAAFIGKETLKDESGQECKICRKIIYLNTDFVSVKQRLPKYYSWERCSKHHLNFLGQNRSYVRKKDDGCKAYWKVCLHYNLHKAQPAERFFDPNQRGKALHQKQALRKSQRSQTGEKLYKCTECGKVFIQKANLVVHQRTHTGEKPYECCECAKAFSQKSTLIAHQRTHTGEKPYECSECGKTFIQKSTLIKHQRTHTGEKPFVCDKCPKAFKSSYHLIRHEKTHIRQAFYKGIKCTTSSLIYQRIHTSEKPQCSEHGKASDEKPSPTKHWRTHTKENIYECSKCGKSFRGKSHLSVHQRIHTGEKPYECSICGKTFSGKSHLSVHHRTHTGEKPYECRRCGKAFGEKSTLIVHQRMHTGEKPYKCNECGKAFSEKSPLIKHQRIHTGERPYECTDCKKAFSRKSTLIKHQRIHTGEKPYKCSECGKAFSVKSTLIVHHRTHTGEKPYECRDCGKAFSGKSTLIKHQRSHTGDKNL.

The region spanning 8-79 (LTFKDVFVDF…DGGTPVRTCA (72 aa)) is the KRAB domain. 4 consecutive C2H2-type zinc fingers follow at residues 224–246 (YKCT…QRTH), 252–274 (YECC…QRTH), 280–302 (YECS…QRTH), and 308–330 (FVCD…EKTH). The span at 357 to 371 (PQCSEHGKASDEKPS) shows a compositional bias: basic and acidic residues. Residues 357-377 (PQCSEHGKASDEKPSPTKHWR) are disordered. 7 C2H2-type zinc fingers span residues 385 to 407 (YECS…QRIH), 413 to 435 (YECS…HRTH), 441 to 463 (YECR…QRMH), 469 to 491 (YKCN…QRIH), 497 to 519 (YECT…QRIH), 525 to 547 (YKCS…HRTH), and 553 to 575 (YECR…QRSH).

Belongs to the krueppel C2H2-type zinc-finger protein family. In terms of tissue distribution, expressed in testis.

It is found in the nucleus. Functionally, may be involved in transcriptional regulation. In Homo sapiens (Human), this protein is Zinc finger protein 674 (ZNF674).